Reading from the N-terminus, the 755-residue chain is Large structural phosphoprotein (755 aa).

Disordered regions lie at residues 312 to 333 (ESSSKKTSHGSSFNPEPFIKTE) and 522 to 555 (QSFDDEHNEMSLPPQDQKSIKQKNGNKANSSTKT). Residues 535-555 (PQDQKSIKQKNGNKANSSTKT) are compositionally biased toward polar residues.

Belongs to the herpesviridae large structural phosphoprotein family. In terms of processing, phosphorylated at multiple sites.

It is found in the virion tegument. The protein is Large structural phosphoprotein (U11) of Homo sapiens (Human).